A 142-amino-acid polypeptide reads, in one-letter code: MARKINCYIKLQVKAGQANPAPPVGPALGQRGLNIMEFCKAFNAATSKLEPGLPTPVIITAYSDRTFTFVTKSTPASVLLKKAAGVTSGSKRPNTDKVGKVTRKQLEEIVKVKEADLTAADLEAAVRTIAGSARSMGLTVEG.

This sequence belongs to the universal ribosomal protein uL11 family. In terms of assembly, part of the ribosomal stalk of the 50S ribosomal subunit. Interacts with L10 and the large rRNA to form the base of the stalk. L10 forms an elongated spine to which L12 dimers bind in a sequential fashion forming a multimeric L10(L12)X complex. Post-translationally, one or more lysine residues are methylated.

Its function is as follows. Forms part of the ribosomal stalk which helps the ribosome interact with GTP-bound translation factors. The protein is Large ribosomal subunit protein uL11 of Xanthomonas oryzae pv. oryzae (strain MAFF 311018).